A 355-amino-acid polypeptide reads, in one-letter code: 3-dehydroquinate synthase (355 aa).

NAD(+) contacts are provided by residues 106-110, 130-131, K143, and K152; these read GVVGD and TS. Positions 185, 246, and 262 each coordinate Zn(2+).

This sequence belongs to the sugar phosphate cyclases superfamily. Dehydroquinate synthase family. The cofactor is Co(2+). Zn(2+) is required as a cofactor. NAD(+) serves as cofactor.

Its subcellular location is the cytoplasm. It catalyses the reaction 7-phospho-2-dehydro-3-deoxy-D-arabino-heptonate = 3-dehydroquinate + phosphate. The protein operates within metabolic intermediate biosynthesis; chorismate biosynthesis; chorismate from D-erythrose 4-phosphate and phosphoenolpyruvate: step 2/7. Catalyzes the conversion of 3-deoxy-D-arabino-heptulosonate 7-phosphate (DAHP) to dehydroquinate (DHQ). The chain is 3-dehydroquinate synthase from Latilactobacillus sakei subsp. sakei (strain 23K) (Lactobacillus sakei subsp. sakei).